A 129-amino-acid chain; its full sequence is Protein Turandot A (129 aa).

An N-terminal signal peptide occupies residues 1 to 21 (MNSLTGFMCCALLLISPLCMG). An N-linked (GlcNAc...) asparagine glycan is attached at asparagine 49.

It belongs to the Turandot family.

Its subcellular location is the secreted. Its function is as follows. A humoral factor that plays a role in stress tolerance; gives increased resistance to the lethal effects of bacterial challenge and stress. Regulated by the JAK/STAT pathway and NF-KB-like Relish pathway in the fat body, upd3 in the hemocytes and Mekk1 in response to septic injury and consequent immune response. The chain is Protein Turandot A (TotA) from Drosophila yakuba (Fruit fly).